A 425-amino-acid polypeptide reads, in one-letter code: (S)-6-hydroxynicotine oxidase (425 aa).

FAD-binding positions include serine 12, glutamate 31, 38-39 (GR), and 56-59 (GGAY). Asparagine 166 lines the (S)-6-hydroxynicotine pocket. Valine 226 contributes to the FAD binding site. 3 residues coordinate (S)-6-hydroxynicotine: tyrosine 311, phenylalanine 326, and tryptophan 371. FAD-binding positions include serine 398 and 406–408 (GYI). (S)-6-hydroxynicotine is bound at residue tyrosine 407.

The protein belongs to the flavin monoamine oxidase family. As to quaternary structure, homodimer. It depends on FAD as a cofactor.

It is found in the cytoplasm. The enzyme catalyses (S)-6-hydroxynicotine + O2 + H2O = 6-hydroxypseudooxynicotine + H2O2. It catalyses the reaction (S)-6-hydroxynicotine + O2 = 6-hydroxy-N-methylmyosmine + H2O2. The protein operates within alkaloid degradation; nicotine degradation; 6-hydroxypseudooxynicotine from nicotine (S-isomer route): step 2/2. Inhibited by (R)-6-hydroxynicotine. Inhibited by high concentrations of phenanthroline. Activity is strongly affected by Hg(2+) and p-chloromercuriphenylsulfonate, but not by N-ethylmaleimide and 5,5'-dithiobis-(2-nitrobenzoate). In terms of biological role, involved in the degradation of L-nicotine. Catalyzes the oxidation of (S)-6-hydroxynicotine (6-hydroxy-L-nicotine) to 6-hydroxypseudooxynicotine. Oxidation of the pyrrolidine ring of (S)-6-hydroxynicotine leads to the formation of the optically inactive 6-hydroxy-N-methylmyosmine, which hydrolyzes spontaneously to 6-hydroxypseudooxynicotine. Acts with absolute stereospecificity on the L-form of 6-hydroxynicotine. Can also use (S)-6-hydroxynornicotine. The protein is (S)-6-hydroxynicotine oxidase of Paenarthrobacter nicotinovorans (Arthrobacter nicotinovorans).